Reading from the N-terminus, the 539-residue chain is MNSSSSTTTTDTLHSFMEASALLIDQYFLGWIFAFLFGFLLLLNFKRKREKNNSTEFGTDDSNGYYTPENIAGSTDVIIVGAGVAGSALAYTLANDGRRVHVIERDLTEQDRIVGELLQPGGYLKLIELGLEDCVNEIDAQRVFGYALYMDGKNTRLSYPLEKFHSDVAGRSFHNGRFVQRMREKAASLPNVRMEQGTVTSLVEKKGSVKGVQYKTKDGQELSAFAPLTIVCDGCFSNLRRSLCNPKVEVPSCFVGLILENIDLPHINHGHVILADPSPILFYKISSTEIRCLVDVPGQKVPCISNGELANYLKTVVAPQVPKQLYNSFIAAVDKGNIRTMPNRSMPADPHPTPGALLLGDAFNMRHPLTGGGMTVALSDIVLIRDLLRPLRDLHDSSTLCKYLESFYTLRKPVASTINTLAGALYKVFCASPDKARQEMRNACFDYLSLGGICSQGPIALLSGLNPRPISLFLHFFAVAIYGVGRLLIPFPSPKRMWLGARLILGASGIIFPIIKSEGLRQMFFPAIVPAYYRAPPIH.

The next 2 membrane-spanning stretches (helical) occupy residues 22–42 (LLID…FLLL) and 71–91 (IAGS…ALAY). FAD is bound by residues 84-85 (VA), 104-105 (ER), Arg-112, Arg-183, Val-199, Asp-361, and Met-374. The chain crosses the membrane as a helical span at residues 472 to 492 (LFLHFFAVAIYGVGRLLIPFP).

It belongs to the squalene monooxygenase family. Requires FAD as cofactor. As to expression, mostly expressed in flower buds and leaves, and, to a lower extent, at high levels thought, in roots and petioles. In petioles, preferentially observed in vascular bundle tissue (phloem cells and parenchymatous cells near xylem) and resin ducts.

Its subcellular location is the microsome membrane. The protein resides in the endoplasmic reticulum membrane. The catalysed reaction is squalene + reduced [NADPH--hemoprotein reductase] + O2 = (S)-2,3-epoxysqualene + oxidized [NADPH--hemoprotein reductase] + H2O + H(+). It functions in the pathway terpene metabolism; lanosterol biosynthesis; lanosterol from farnesyl diphosphate: step 2/3. In terms of biological role, component of the triterpene saponins (e.g. ginsenosides or panaxosides) and phytosterols biosynthetic pathways. Catalyzes the first oxygenation step in sterol biosynthesis and is suggested to be one of the rate-limiting enzymes in this pathway. The protein is Squalene monooxygenase SE1 of Panax ginseng (Korean ginseng).